We begin with the raw amino-acid sequence, 287 residues long: Mitochondrial glycine transporter A (287 aa).

Solcar repeat units follow at residues 7–97 (HPAV…LKQR), 104–188 (PGPL…TKHL), and 198–282 (YAPV…LMAQ). 6 helical membrane-spanning segments follow: residues 13–38 (FMCG…TRLQ), 72–98 (GVSP…KQRY), 110–135 (VLLG…TRFE), 163–186 (GLMA…SQTK), 202–228 (ANFS…KTHI), and 257–275 (GAVP…AWTV).

Belongs to the mitochondrial carrier (TC 2.A.29) family. SLC25A38 subfamily. As to expression, at 24 hours post-fertilization, expressed predominantly in posterior blood island, posterior cardinal vein and circulating blood, as well as in somites, brain and retina. At 34 hours post-fertilization, becomes restricted to posterior blood island and circulating blood.

It localises to the mitochondrion inner membrane. The enzyme catalyses glycine(in) = glycine(out). Its function is as follows. Mitochondrial glycine transporter that imports glycine into the mitochondrial matrix. Plays an important role in providing glycine for the first enzymatic step in heme biosynthesis, the condensation of glycine with succinyl-CoA to produce 5-aminolevulinate (ALA) in the mitochondrial matrix. Required during erythropoiesis. In terms of biological role, may play a role as pro-apoptotic protein that induces caspase-dependent apoptosis. This is Mitochondrial glycine transporter A (slc25a38a) from Danio rerio (Zebrafish).